The sequence spans 478 residues: F-box/kelch-repeat protein At1g51550 (478 aa).

The tract at residues 1 to 20 (MAAESTRNSSPPSTSQSSSP) is disordered. The span at 9–20 (SSPPSTSQSSSP) shows a compositional bias: low complexity. Residues 18-64 (SSPIINLPDDHLLTILLLLPVDSILSFSMTCKRYKSLACSDSLWEAL) form the F-box domain. 2 Kelch repeats span residues 135 to 187 (LVLF…VIGE) and 246 to 299 (KMVV…CIRE).

This Arabidopsis thaliana (Mouse-ear cress) protein is F-box/kelch-repeat protein At1g51550.